The sequence spans 890 residues: Translation initiation factor IF-2 (890 aa).

Disordered stretches follow at residues 31–164 (KLAQ…PAEP) and 189–266 (FKAP…ESLK). Residues 42 to 54 (SSSEKPSAKEKSV) show a composition bias toward basic and acidic residues. Over residues 55-72 (KVALAATSTPTASAEQAS) the composition is skewed to low complexity. Residues 114–128 (PEPELEVVDEVCDES) are compositionally biased toward acidic residues. Basic and acidic residues-rich tracts occupy residues 149–163 (PQEK…KPAE) and 242–266 (PKRD…ESLK). Residues 395–564 (IRSPIVAFMG…ALQAEVLELK (170 aa)) enclose the tr-type G domain. The tract at residues 404-411 (GHVDHGKT) is G1. 404 to 411 (GHVDHGKT) provides a ligand contact to GTP. The G2 stretch occupies residues 429 to 433 (AITQH). The G3 stretch occupies residues 450–453 (DTPG). GTP-binding positions include 450 to 454 (DTPGH) and 504 to 507 (NKCD). The segment at 504-507 (NKCD) is G4. Residues 540–542 (SAK) are G5.

The protein belongs to the TRAFAC class translation factor GTPase superfamily. Classic translation factor GTPase family. IF-2 subfamily.

Its subcellular location is the cytoplasm. Functionally, one of the essential components for the initiation of protein synthesis. Protects formylmethionyl-tRNA from spontaneous hydrolysis and promotes its binding to the 30S ribosomal subunits. Also involved in the hydrolysis of GTP during the formation of the 70S ribosomal complex. The protein is Translation initiation factor IF-2 (infB) of Chlamydia pneumoniae (Chlamydophila pneumoniae).